The following is a 425-amino-acid chain: UDP-N-acetylglucosamine 1-carboxyvinyltransferase (425 aa).

22 to 23 (KN) contributes to the phosphoenolpyruvate binding site. R98 lines the UDP-N-acetyl-alpha-D-glucosamine pocket. C122 acts as the Proton donor in catalysis. C122 is modified (2-(S-cysteinyl)pyruvic acid O-phosphothioketal). Residues 127 to 131 (RPVDQ), D313, and I335 contribute to the UDP-N-acetyl-alpha-D-glucosamine site.

The protein belongs to the EPSP synthase family. MurA subfamily.

The protein localises to the cytoplasm. It carries out the reaction phosphoenolpyruvate + UDP-N-acetyl-alpha-D-glucosamine = UDP-N-acetyl-3-O-(1-carboxyvinyl)-alpha-D-glucosamine + phosphate. It functions in the pathway cell wall biogenesis; peptidoglycan biosynthesis. In terms of biological role, cell wall formation. Adds enolpyruvyl to UDP-N-acetylglucosamine. This chain is UDP-N-acetylglucosamine 1-carboxyvinyltransferase, found in Xylella fastidiosa (strain M12).